Reading from the N-terminus, the 315-residue chain is ATP synthase gamma chain (315 aa).

It belongs to the ATPase gamma chain family. As to quaternary structure, F-type ATPases have 2 components, CF(1) - the catalytic core - and CF(0) - the membrane proton channel. CF(1) has five subunits: alpha(3), beta(3), gamma(1), delta(1), epsilon(1). CF(0) has three main subunits: a, b and c.

The protein resides in the cell membrane. Produces ATP from ADP in the presence of a proton gradient across the membrane. The gamma chain is believed to be important in regulating ATPase activity and the flow of protons through the CF(0) complex. The sequence is that of ATP synthase gamma chain from Latilactobacillus sakei subsp. sakei (strain 23K) (Lactobacillus sakei subsp. sakei).